A 578-amino-acid chain; its full sequence is Telomere repeat-binding protein 1 (578 aa).

Residues 293–372 form the Ubiquitin-like domain; that stretch reads VKLRIKSFRV…HLDSLDFSLE (80 aa). The interval 440–467 is disordered; that stretch reads ELSSQSQPPSRKSRRSEQQQQQAAQRRI. The 60-residue stretch at 463–522 folds into the HTH myb-type domain; it reads AQRRIRRPFSVAEVEALVQAVEKLGTGRWRDVKLCAFEDADHRTYVDLKDKWKTLVHTAK. 3 interaction with DNA regions span residues 465–469, 511–515, and 522–529; these read RRIRR, KDKWK, and KISPQQRR. Positions 491-518 form a DNA-binding region, H-T-H motif; that stretch reads WRDVKLCAFEDADHRTYVDLKDKWKTLV.

As to quaternary structure, homodimer and heterodimer with TRP2 and TRP3. Interacts with KU70. In terms of tissue distribution, expressed ubiquitously. Highest expression in flowers and leaves.

The protein resides in the nucleus. In terms of biological role, binds specifically to the plant telomeric double-stranded DNA sequences 5'-GGTTTAG-3'. At least 4 repeats of telomeric sequences are required for binding. Induces DNA bending. In Arabidopsis thaliana (Mouse-ear cress), this protein is Telomere repeat-binding protein 1 (TRP1).